Reading from the N-terminus, the 492-residue chain is MTLWINGDWITGQGERRRKTNPVSAEILWQGNDANAAQVAEACQAARAAFPRWARQPFAARQAIVEKFAALLEAHKAELTEVIARETGKPRWEAATEVTAMINKIAISIKAYHARTGAQKSELVDGAATLRHRPHGVLAVFGPYNFPGHLPNGHIVPALLAGNTLIFKPSELTPWTGETVIKLWERAGLPAGVLNLVQGGRETGQALSSLDDLDGLLFTGSASTGYQLHRQLSGQPEKILALEMGGNNPLIIEDAANIDAAVHLTLQSAFITAGQRCTCARRLLVKQGAQGDAFLARLVDVAGRLQPGRWDDDPQPFIGGLISAQAAQHVMEAWRQREALGGRTLLAPRKVKEGTSLLTPGIIELTGVADVPDEEVFGPLLNVWRYAHFDEAIRLANNTRFGLSCGLVSTDRAQFEQLLLEARAGIVNWNKPLTGAASTAPFGGVGASGNHRPSAWYAADYCAWPMASLESPELTLPATLSPGLDFSRREAV.

220–225 (GSASTG) is a binding site for NAD(+). Residues Glu243 and Cys277 contribute to the active site.

This sequence belongs to the aldehyde dehydrogenase family. AstD subfamily.

The catalysed reaction is N-succinyl-L-glutamate 5-semialdehyde + NAD(+) + H2O = N-succinyl-L-glutamate + NADH + 2 H(+). Its pathway is amino-acid degradation; L-arginine degradation via AST pathway; L-glutamate and succinate from L-arginine: step 4/5. Functionally, catalyzes the NAD-dependent reduction of succinylglutamate semialdehyde into succinylglutamate. The chain is N-succinylglutamate 5-semialdehyde dehydrogenase from Salmonella typhimurium (strain LT2 / SGSC1412 / ATCC 700720).